We begin with the raw amino-acid sequence, 210 residues long: Regulator of G-protein signaling 17 (210 aa).

The tract at residues 1 to 21 (MRKRQQSQNEGTQAVSQAPGN) is disordered. The 117-residue stretch at 84 to 200 (NFDKMMKTPA…LNSQIYKAFV (117 aa)) folds into the RGS domain. The residue at position 137 (Y137) is a Phosphotyrosine.

As to quaternary structure, interacts with GNAI1 and GNAQ. Interacts with GNAZ and GNAI2. Interacts with OPRM1. Forms a complex with mu-opioid receptors and G(alpha)z/i2 subunits, including GNAZ and GNAI2; the formation of this complex results in mu-opioid receptor desensitization. Interacts with HINT1. Post-translationally, N- and O-glycosylated in synapsomal membranes. Serine phosphorylated in synapsomal membranes. In terms of processing, sumoylated with SUMO1 and SUM02 in synaptosomes. The sumoylated forms act as a scaffold for sequestering mu-opioid receptor-activated G(alpha) subunits. Desumoylated by HINT1. In terms of tissue distribution, detected in brain (at protein level). Highly expressed in the hypothalamus, periaqueductal gray matter, and pons-medulla. Lower levels in the thalamus, cortex and spinal cord. Weak expression in the striatum and cerebellum.

Its subcellular location is the membrane. It localises to the synapse. The protein resides in the synaptosome. It is found in the nucleus. The protein localises to the cytoplasm. Functionally, regulates G protein-coupled receptor signaling cascades, including signaling via muscarinic acetylcholine receptor CHRM2 and dopamine receptor DRD2. Inhibits signal transduction by increasing the GTPase activity of G protein alpha subunits, thereby driving them into their inactive GDP-bound form. Binds selectively to GNAZ and GNAI2 subunits, accelerates their GTPase activity and regulates their signaling activities. Negatively regulates mu-opioid receptor-mediated activation of the G-proteins. This is Regulator of G-protein signaling 17 (Rgs17) from Mus musculus (Mouse).